An 89-amino-acid chain; its full sequence is MATVIAKVKVMPTSPEVEKEALKETLKELVEKNDAKCRGVSDEPLAFGLYTVFVMVEMEEKEGGMDPIEEAMNALENVESAEVVELSLV.

It belongs to the EF-1-beta/EF-1-delta family.

In terms of biological role, promotes the exchange of GDP for GTP in EF-1-alpha/GDP, thus allowing the regeneration of EF-1-alpha/GTP that could then be used to form the ternary complex EF-1-alpha/GTP/AAtRNA. The protein is Elongation factor 1-beta of Methanococcus maripaludis (strain C6 / ATCC BAA-1332).